The following is a 96-amino-acid chain: Nucleoid-associated protein CF0672 (96 aa).

It belongs to the YbaB/EbfC family. In terms of assembly, homodimer.

It is found in the cytoplasm. It localises to the nucleoid. In terms of biological role, binds to DNA and alters its conformation. May be involved in regulation of gene expression, nucleoid organization and DNA protection. In Chlamydia felis (strain Fe/C-56) (Chlamydophila felis), this protein is Nucleoid-associated protein CF0672.